The primary structure comprises 295 residues: Acetylglutamate kinase (295 aa).

Residues 64 to 65 (GG), Arg86, and Asn179 contribute to the substrate site.

Belongs to the acetylglutamate kinase family. ArgB subfamily.

Its subcellular location is the cytoplasm. The enzyme catalyses N-acetyl-L-glutamate + ATP = N-acetyl-L-glutamyl 5-phosphate + ADP. Its pathway is amino-acid biosynthesis; L-arginine biosynthesis; N(2)-acetyl-L-ornithine from L-glutamate: step 2/4. Its function is as follows. Catalyzes the ATP-dependent phosphorylation of N-acetyl-L-glutamate. The protein is Acetylglutamate kinase of Thermosynechococcus vestitus (strain NIES-2133 / IAM M-273 / BP-1).